Consider the following 388-residue polypeptide: Lamin tail domain-containing protein 1 (388 aa).

In terms of domain architecture, LTD spans 136-254 (EVGQFTSSSL…QAIAWYTPIH (119 aa)). Positions 349 to 388 (EPHNTSTAGGRLDRQPRTRSTRPNRASGSKKKKTSESQKQ) are disordered. The segment covering 365–381 (RTRSTRPNRASGSKKKK) has biased composition (basic residues).

The protein belongs to the intermediate filament family.

This is Lamin tail domain-containing protein 1 (LMNTD1) from Homo sapiens (Human).